The chain runs to 282 residues: 4-diphosphocytidyl-2-C-methyl-D-erythritol kinase (282 aa).

Lys12 is a catalytic residue. 95-105 is a binding site for ATP; the sequence is PMGGGIGGGSS. The active site involves Asp137.

It belongs to the GHMP kinase family. IspE subfamily.

It carries out the reaction 4-CDP-2-C-methyl-D-erythritol + ATP = 4-CDP-2-C-methyl-D-erythritol 2-phosphate + ADP + H(+). Its pathway is isoprenoid biosynthesis; isopentenyl diphosphate biosynthesis via DXP pathway; isopentenyl diphosphate from 1-deoxy-D-xylulose 5-phosphate: step 3/6. Catalyzes the phosphorylation of the position 2 hydroxy group of 4-diphosphocytidyl-2C-methyl-D-erythritol. The polypeptide is 4-diphosphocytidyl-2-C-methyl-D-erythritol kinase (Pseudomonas aeruginosa (strain UCBPP-PA14)).